A 231-amino-acid chain; its full sequence is Adenosylcobinamide-GDP ribazoletransferase (231 aa).

The next 6 helical transmembrane spans lie at 29-49 (ICAY…SMKL), 53-73 (NFLW…LFHF), 101-121 (IGPF…YAFL), 126-146 (IDLI…LHFG), 167-187 (LISL…IISL), and 211-231 (DVLG…LSLI).

Belongs to the CobS family. Mg(2+) is required as a cofactor.

It localises to the cell inner membrane. It catalyses the reaction alpha-ribazole + adenosylcob(III)inamide-GDP = adenosylcob(III)alamin + GMP + H(+). The catalysed reaction is alpha-ribazole 5'-phosphate + adenosylcob(III)inamide-GDP = adenosylcob(III)alamin 5'-phosphate + GMP + H(+). It functions in the pathway cofactor biosynthesis; adenosylcobalamin biosynthesis; adenosylcobalamin from cob(II)yrinate a,c-diamide: step 7/7. Joins adenosylcobinamide-GDP and alpha-ribazole to generate adenosylcobalamin (Ado-cobalamin). Also synthesizes adenosylcobalamin 5'-phosphate from adenosylcobinamide-GDP and alpha-ribazole 5'-phosphate. The protein is Adenosylcobinamide-GDP ribazoletransferase of Kosmotoga olearia (strain ATCC BAA-1733 / DSM 21960 / TBF 19.5.1).